The following is a 402-amino-acid chain: Nodal homolog 4-A (402 aa).

The signal sequence occupies residues 1 to 18 (MHLYFYCLILLFVPGGNS). Residues 19 to 278 (LGINSYLKHM…TIAHTRRHRR (260 aa)) constitute a propeptide that is removed on maturation. Asn37, Asn238, and Asn340 each carry an N-linked (GlcNAc...) asparagine glycan. 3 disulfide bridges follow: Cys302/Cys368, Cys331/Cys399, and Cys335/Cys401.

This sequence belongs to the TGF-beta family. As to quaternary structure, homodimer; disulfide-linked. In terms of tissue distribution, during blastula stages, expressed in the endoderm at a higher level dorsally than ventrally. Expressed in the deep cells of the Spemann organizer at the gastrula stage. Expressed in the notochord (a derivative of the organizer) and neural tube during the neural stages.

It is found in the secreted. Its function is as follows. Cooperation and regulatory loops of multiple nodals are essential for mesendoderm patterning in early embryos. Plays a role in mesoderm formation and may be required for neural development. This is Nodal homolog 4-A (nodal4-a) from Xenopus laevis (African clawed frog).